The primary structure comprises 208 residues: Uracil phosphoribosyltransferase (208 aa).

5-phospho-alpha-D-ribose 1-diphosphate-binding positions include R78, R103, and 130–138 (DPMLATGGS). Residues I193 and 198-200 (GDA) contribute to the uracil site. D199 contributes to the 5-phospho-alpha-D-ribose 1-diphosphate binding site.

This sequence belongs to the UPRTase family. It depends on Mg(2+) as a cofactor.

It carries out the reaction UMP + diphosphate = 5-phospho-alpha-D-ribose 1-diphosphate + uracil. It functions in the pathway pyrimidine metabolism; UMP biosynthesis via salvage pathway; UMP from uracil: step 1/1. Its activity is regulated as follows. Allosterically activated by GTP. Catalyzes the conversion of uracil and 5-phospho-alpha-D-ribose 1-diphosphate (PRPP) to UMP and diphosphate. In Citrobacter koseri (strain ATCC BAA-895 / CDC 4225-83 / SGSC4696), this protein is Uracil phosphoribosyltransferase.